The primary structure comprises 217 residues: Methylthioribulose-1-phosphate dehydratase (217 aa).

Positions 106 and 108 each coordinate Zn(2+).

This sequence belongs to the aldolase class II family. MtnB subfamily. Requires Zn(2+) as cofactor.

It carries out the reaction 5-(methylsulfanyl)-D-ribulose 1-phosphate = 5-methylsulfanyl-2,3-dioxopentyl phosphate + H2O. It functions in the pathway amino-acid biosynthesis; L-methionine biosynthesis via salvage pathway; L-methionine from S-methyl-5-thio-alpha-D-ribose 1-phosphate: step 2/6. In terms of biological role, catalyzes the dehydration of methylthioribulose-1-phosphate (MTRu-1-P) into 2,3-diketo-5-methylthiopentyl-1-phosphate (DK-MTP-1-P). The sequence is that of Methylthioribulose-1-phosphate dehydratase from Xanthomonas euvesicatoria pv. vesicatoria (strain 85-10) (Xanthomonas campestris pv. vesicatoria).